The sequence spans 312 residues: Malate dehydrogenase (312 aa).

Residues 12-17 (GAGFTG) and Asp36 each bind NAD(+). Positions 87 and 93 each coordinate substrate. NAD(+) is bound by residues Asn100 and 123-125 (LTN). A substrate-binding site is contributed by Asn125. A Phosphoserine modification is found at Ser149. Residue Arg156 participates in substrate binding. The active-site Proton acceptor is His180.

The protein belongs to the LDH/MDH superfamily. MDH type 3 family.

The catalysed reaction is (S)-malate + NAD(+) = oxaloacetate + NADH + H(+). Catalyzes the reversible oxidation of malate to oxaloacetate. The chain is Malate dehydrogenase from Bacillus mycoides (strain KBAB4) (Bacillus weihenstephanensis).